A 96-amino-acid chain; its full sequence is MKLRPLHDRVIVKRVENETKTASGIVIPDSAAEKPDQGEVLAVGPGKKNDKGEISPMAVKVGDRVLFGKYSGQTVKVAGDELLVMKEDDLFAVVEK.

The protein belongs to the GroES chaperonin family. As to quaternary structure, heptamer of 7 subunits arranged in a ring. Interacts with the chaperonin GroEL.

It localises to the cytoplasm. Functionally, together with the chaperonin GroEL, plays an essential role in assisting protein folding. The GroEL-GroES system forms a nano-cage that allows encapsulation of the non-native substrate proteins and provides a physical environment optimized to promote and accelerate protein folding. GroES binds to the apical surface of the GroEL ring, thereby capping the opening of the GroEL channel. This chain is Co-chaperonin GroES, found in Albidiferax ferrireducens (strain ATCC BAA-621 / DSM 15236 / T118) (Rhodoferax ferrireducens).